The chain runs to 626 residues: 5'-AMP-activated protein kinase catalytic subunit alpha-2 (626 aa).

Basic and acidic residues predominate over residues Met-1 to Ser-24. The tract at residues Met-1–Glu-77 is disordered. The segment covering Asn-38 to Lys-49 has biased composition (basic residues). Over residues Asp-58 to Glu-77 the composition is skewed to polar residues. A Protein kinase domain is found at Tyr-87–Phe-339. Residues Leu-93–Val-101 and Lys-116 each bind ATP. Catalysis depends on Asp-210, which acts as the Proton acceptor. The residue at position 243 (Thr-243) is a Phosphothreonine; by par-4. The segment at Ser-541–Thr-568 is disordered. The segment covering Gly-542 to Ser-555 has biased composition (low complexity).

This sequence belongs to the protein kinase superfamily. CAMK Ser/Thr protein kinase family. SNF1 subfamily. As to quaternary structure, tetramer, composed of 2 regulatory (R) and 2 catalytic (C) subunits. In the presence of cAMP it dissociates into 2 active monomeric C subunits and an R dimer that binds four cAMP molecules. In terms of processing, phosphorylated on Thr-243 in response to oxidative stress and during dauer development. Phosphorylation at Thr-243 is increased in response to sodium azide or the AMP analog AICAR (5-amino-1-(5-phospho-beta-D-ribosyl)imidazole-4-carboxamide). In terms of tissue distribution, expressed in the pharynx, the ventral cord, neurons including the hermaphrodite-specific neuron, body wall muscles, the vulva, the excretory canal, and weakly in the intestine.

It carries out the reaction L-seryl-[protein] + ATP = O-phospho-L-seryl-[protein] + ADP + H(+). The catalysed reaction is L-threonyl-[protein] + ATP = O-phospho-L-threonyl-[protein] + ADP + H(+). Its activity is regulated as follows. Activated by phosphorylation. Functionally, acts as a sensor that couples lifespan to information about energy levels and insulin-like signals. Role in motility and response to oxidative stress. Involved in the establishment of germline stem cell (GSC) quiescence during dauer development. Plays a role in axon regrowth after axotomy in PLM neurons. Plays a role in the maintenance of glycogen stores which are necessary for resistance to hyperosmotic stress. Plays a role in the regulation of flp-7 secretion from ASI neurons. Keeps the CREB-regulated transcription coactivator 1 homolog crtc-1 inactive which in turn inhibits flp-7 secretion. Following serotonin signaling, derepresses crtc-1 which stimulates flp-7 secretion and subsequent body fat loss. The polypeptide is 5'-AMP-activated protein kinase catalytic subunit alpha-2 (Caenorhabditis elegans).